Here is a 560-residue protein sequence, read N- to C-terminus: Dihydroxy-acid dehydratase (560 aa).

Asp80 is a Mg(2+) binding site. Cys121 serves as a coordination point for [2Fe-2S] cluster. The Mg(2+) site is built by Asp122 and Lys123. Lys123 bears the N6-carboxylysine mark. Cys194 lines the [2Fe-2S] cluster pocket. Mg(2+) is bound at residue Glu447. Ser473 functions as the Proton acceptor in the catalytic mechanism.

Belongs to the IlvD/Edd family. In terms of assembly, homodimer. [2Fe-2S] cluster is required as a cofactor. Mg(2+) serves as cofactor.

It catalyses the reaction (2R)-2,3-dihydroxy-3-methylbutanoate = 3-methyl-2-oxobutanoate + H2O. The catalysed reaction is (2R,3R)-2,3-dihydroxy-3-methylpentanoate = (S)-3-methyl-2-oxopentanoate + H2O. The protein operates within amino-acid biosynthesis; L-isoleucine biosynthesis; L-isoleucine from 2-oxobutanoate: step 3/4. Its pathway is amino-acid biosynthesis; L-valine biosynthesis; L-valine from pyruvate: step 3/4. In terms of biological role, functions in the biosynthesis of branched-chain amino acids. Catalyzes the dehydration of (2R,3R)-2,3-dihydroxy-3-methylpentanoate (2,3-dihydroxy-3-methylvalerate) into 2-oxo-3-methylpentanoate (2-oxo-3-methylvalerate) and of (2R)-2,3-dihydroxy-3-methylbutanoate (2,3-dihydroxyisovalerate) into 2-oxo-3-methylbutanoate (2-oxoisovalerate), the penultimate precursor to L-isoleucine and L-valine, respectively. The chain is Dihydroxy-acid dehydratase from Chlorobaculum tepidum (strain ATCC 49652 / DSM 12025 / NBRC 103806 / TLS) (Chlorobium tepidum).